The chain runs to 272 residues: Phosphate import ATP-binding protein PstB 1 (272 aa).

The 242-residue stretch at leucine 26–isoleucine 267 folds into the ABC transporter domain. ATP is bound at residue glycine 58–serine 65.

Belongs to the ABC transporter superfamily. Phosphate importer (TC 3.A.1.7) family. The complex is composed of two ATP-binding proteins (PstB), two transmembrane proteins (PstC and PstA) and a solute-binding protein (PstS).

Its subcellular location is the cell inner membrane. The catalysed reaction is phosphate(out) + ATP + H2O = ADP + 2 phosphate(in) + H(+). Functionally, part of the ABC transporter complex PstSACB involved in phosphate import. Responsible for energy coupling to the transport system. This is Phosphate import ATP-binding protein PstB 1 from Shewanella oneidensis (strain ATCC 700550 / JCM 31522 / CIP 106686 / LMG 19005 / NCIMB 14063 / MR-1).